We begin with the raw amino-acid sequence, 145 residues long: Large ribosomal subunit protein uL15 (145 aa).

The tract at residues 1–52 (MKLNTIAPAEGSKKDRRRVGRGIGSGFGKTAGRGHKGQHARSGGYHKVGFEG) is disordered. A compositionally biased stretch (gly residues) spans 21–31 (RGIGSGFGKTA).

Belongs to the universal ribosomal protein uL15 family. In terms of assembly, part of the 50S ribosomal subunit.

In terms of biological role, binds to the 23S rRNA. This Acidithiobacillus ferrooxidans (strain ATCC 53993 / BNL-5-31) (Leptospirillum ferrooxidans (ATCC 53993)) protein is Large ribosomal subunit protein uL15.